The following is a 185-amino-acid chain: Ribosome-recycling factor (185 aa).

Belongs to the RRF family.

The protein localises to the cytoplasm. Responsible for the release of ribosomes from messenger RNA at the termination of protein biosynthesis. May increase the efficiency of translation by recycling ribosomes from one round of translation to another. The sequence is that of Ribosome-recycling factor from Buchnera aphidicola subsp. Acyrthosiphon pisum (strain 5A).